Reading from the N-terminus, the 56-residue chain is TauPI-stichotoxin-Hcr2d (56 aa).

The BPTI/Kunitz inhibitor domain maps to Cys-4–Cys-54. Disulfide bonds link Cys-4–Cys-54, Cys-13–Cys-37, and Cys-29–Cys-50.

The protein belongs to the venom Kunitz-type family. Sea anemone type 2 potassium channel toxin subfamily.

It is found in the secreted. It localises to the nematocyst. Its function is as follows. This protease inhibitor shows two different activities, it inhibits both the capsaicin receptor TRPV1 and serine proteases. It partially blocks the capsaicin- and acid-induced response of TRPV1, a receptor of the pain pathway. It also weakly inhibits trypsin and chymotrypsin activity (Ki=0.5 uM and Ki=7 uM, respectively). In addition, it may also alter tachykinin levels by suppressing endogenous proteases. In vivo, it shows antinociceptive and analgesic activities. It significantly prolongs paw withdrawal latency and blocks heat-induced and chemical-induced acute pain. In addition, it also shows anti-inflammatory and analgesic effects in models of osteoarthritis and rheumatoid arthritis. In vivo, unlike other TRPV1 antagonists whose activity is associated with hyperthermia, this protein has the remarkable feature of dropping core body temperature. This is TauPI-stichotoxin-Hcr2d from Radianthus crispa (Leathery sea anemone).